The chain runs to 37 residues: Diuretic hormone 1 (37 aa).

Belongs to the sauvagine/corticotropin-releasing factor/urotensin I family.

Its subcellular location is the secreted. In terms of biological role, stimulates fluid secretion by the Malpighian tubules. Increases cyclic AMP production. This is Diuretic hormone 1 from Tenebrio molitor (Yellow mealworm beetle).